Consider the following 140-residue polypeptide: Small ribosomal subunit protein uS12 (140 aa).

Aspartate 102 bears the 3-methylthioaspartic acid mark. The disordered stretch occupies residues 121 to 140 (ANRQQSRSKYGAKKPKAAKK). Residues 130 to 140 (YGAKKPKAAKK) show a composition bias toward basic residues.

The protein belongs to the universal ribosomal protein uS12 family. In terms of assembly, part of the 30S ribosomal subunit. Contacts proteins S8 and S17. May interact with IF1 in the 30S initiation complex.

With S4 and S5 plays an important role in translational accuracy. Functionally, interacts with and stabilizes bases of the 16S rRNA that are involved in tRNA selection in the A site and with the mRNA backbone. Located at the interface of the 30S and 50S subunits, it traverses the body of the 30S subunit contacting proteins on the other side and probably holding the rRNA structure together. The combined cluster of proteins S8, S12 and S17 appears to hold together the shoulder and platform of the 30S subunit. This is Small ribosomal subunit protein uS12 from Alkaliphilus oremlandii (strain OhILAs) (Clostridium oremlandii (strain OhILAs)).